Consider the following 314-residue polypeptide: GTPase Era (314 aa).

In terms of domain architecture, Era-type G spans 21-189 (KSGFVGIIGR…QNTLIEQLEP (169 aa)). Residues 29-36 (GRPNVGKS) form a G1 region. Position 29 to 36 (29 to 36 (GRPNVGKS)) interacts with GTP. Residues 55–59 (QTTRN) form a G2 region. A G3 region spans residues 76–79 (DTPG). GTP is bound by residues 76 to 80 (DTPGI) and 138 to 141 (NKSD). Residues 138-141 (NKSD) are G4. The G5 stretch occupies residues 168 to 170 (FSA). The 85-residue stretch at 212–296 (IREQILQLTR…FLKLFVKVEP (85 aa)) folds into the KH type-2 domain.

This sequence belongs to the TRAFAC class TrmE-Era-EngA-EngB-Septin-like GTPase superfamily. Era GTPase family. Monomer.

Its subcellular location is the cytoplasm. The protein resides in the cell inner membrane. An essential GTPase that binds both GDP and GTP, with rapid nucleotide exchange. Plays a role in 16S rRNA processing and 30S ribosomal subunit biogenesis and possibly also in cell cycle regulation and energy metabolism. The sequence is that of GTPase Era from Crocosphaera subtropica (strain ATCC 51142 / BH68) (Cyanothece sp. (strain ATCC 51142)).